The sequence spans 254 residues: Peroxisomal membrane protein 11-2 (254 aa).

The Cytoplasmic segment spans residues 1-113; sequence MVTAAGSPSS…YHPHPHVHPL (113 aa). A helical transmembrane segment spans residues 114 to 134; the sequence is LVLLAYGGQGVYNFLEQFAWL. At 135–227 the chain is on the lumenal side; that stretch reads AKAGLLPARL…TVGDVTGRKG (93 aa). The chain crosses the membrane as a helical span at residues 228–247; it reads LLGSSTLMASAGLLSALISV. Over 248-254 the chain is Cytoplasmic; it reads HKNWNSC.

This sequence belongs to the peroxin-11 family.

It localises to the peroxisome membrane. Involved in peroxisomal proliferation. The sequence is that of Peroxisomal membrane protein 11-2 (PEX11-2) from Oryza sativa subsp. japonica (Rice).